We begin with the raw amino-acid sequence, 883 residues long: AP-5 complex subunit beta-1 (883 aa).

As to quaternary structure, probably part of the adaptor protein complex 5 (AP-5).

In terms of biological role, as part of AP-5, a probable fifth adaptor protein complex, it may be involved in endosomal transport. This is AP-5 complex subunit beta-1 (ap5b1) from Xenopus tropicalis (Western clawed frog).